The sequence spans 149 residues: Transcriptional repressor NrdR (149 aa).

A zinc finger lies at cysteine 3–cysteine 34. The ATP-cone domain maps to isoleucine 49–threonine 139.

Belongs to the NrdR family. The cofactor is Zn(2+).

Its function is as follows. Negatively regulates transcription of bacterial ribonucleotide reductase nrd genes and operons by binding to NrdR-boxes. In Clostridium perfringens (strain ATCC 13124 / DSM 756 / JCM 1290 / NCIMB 6125 / NCTC 8237 / Type A), this protein is Transcriptional repressor NrdR.